The sequence spans 161 residues: Tropomyosin (161 aa).

Residues 1–161 adopt a coiled-coil conformation; it reads MDKLREKINA…DEVHQALEDL (161 aa). Basic and acidic residues predominate over residues 40–52; it reads EQEYESLSRKSEA. Disordered regions lie at residues 40–65 and 107–134; these read EQEY…EETK and EKMR…DDME.

As to quaternary structure, homodimer.

It localises to the cytoplasm. Its subcellular location is the cytoskeleton. Functionally, forms part of the F-actin contractile ring during cytokinesis. This is Tropomyosin (cdc8) from Schizosaccharomyces pombe (strain 972 / ATCC 24843) (Fission yeast).